The sequence spans 140 residues: Nucleoside diphosphate kinase (140 aa).

ATP contacts are provided by K11, F59, R87, T93, R104, and N114. H117 functions as the Pros-phosphohistidine intermediate in the catalytic mechanism.

The protein belongs to the NDK family. As to quaternary structure, homotetramer. The cofactor is Mg(2+).

The protein resides in the cytoplasm. It catalyses the reaction a 2'-deoxyribonucleoside 5'-diphosphate + ATP = a 2'-deoxyribonucleoside 5'-triphosphate + ADP. The enzyme catalyses a ribonucleoside 5'-diphosphate + ATP = a ribonucleoside 5'-triphosphate + ADP. Major role in the synthesis of nucleoside triphosphates other than ATP. The ATP gamma phosphate is transferred to the NDP beta phosphate via a ping-pong mechanism, using a phosphorylated active-site intermediate. The protein is Nucleoside diphosphate kinase of Rhizobium etli (strain CIAT 652).